The chain runs to 727 residues: MQQKTKLFLQALKYSIPHLGKCMQKQHLNHYNFADHCYNRIKLKKYHLTKCLQNKPKISELARNIPSRSFSCKDLQPVKQENEKPLPENMDAFEKVRTKLETQPQEEYEIINVEVKHGGFVYYQEGCCLVRSKDEEADNDNYEVLFNLEELKLDQPFIDCIRVAPDEKYVAAKIRTEDSEASTCVIIKLSDQPVMEASFPNVSSFEWVKDEEDEDVLFYTFQRNLRCHDVYRATFGDNKRNERFYTEKDPSYFVFLYLTKDSRFLTINIMNKTTSEVWLIDGLSPWDPPVLIQKRIHGVLYYVEHRDDELYILTNVGEPTEFKLMRTAADTPAIMNWDLFFTMKRNTKVIDLDMFKDHCVLFLKHSNLLYVNVIGLADDSVRSLKLPPWACGFIMDTNSDPKNCPFQLCSPIRPPKYYTYKFAEGKLFEETGHEDPITKTSRVLRLEAKSKDGKLVPMTVFHKTDSEDLQKKPLLVHVYGAYGMDLKMNFRPERRVLVDDGWILAYCHVRGGGELGLQWHADGRLTKKLNGLADLEACIKTLHGQGFSQPSLTTLTAFSAGGVLAGALCNSNPELVRAVTLEAPFLDVLNTMMDTTLPLTLEELEEWGNPSSDEKHKNYIKRYCPYQNIKPQHYPSIHITAYENDERVPLKGIVSYTEKLKEAIAEHAKDTGEGYQTPNIILDIQPGGNHVIEDSHKKITAQIKFLYEELGLDSTSVFEDLKKYLKF.

An N-acetylmethionine modification is found at M1. Active-site charge relay system residues include S559, D645, and H690.

The protein belongs to the peptidase S9A family. As to quaternary structure, homodimer. Interacts with the AP-1 complex. As to expression, expressed in pyramidal neurons of the temporal cortex and neocortex (at protein level). Widely expressed. Expressed at higher level in brain, skeletal muscle, heart and kidney. Expressed at the endplates in the neuromuscular junction.

Its subcellular location is the cytoplasm. The protein resides in the cytosol. The protein localises to the golgi apparatus. It localises to the trans-Golgi network. It is found in the cytoskeleton. Its subcellular location is the nucleus. Its activity is regulated as follows. Inhibited by PMSF and Prefabloc, as well as leupeptin at high concentrations. Partially inhibited by TPCK, a chymotrypsin inhibitor and E64, a cysteine protease inhibitor. Not affected by 4-amidinophenyl-methanesulfonyl fluoride (APMSF), pepstatin or EDTA. Inhibited by 1-isobutyl-3-oxo-3,5,6,7-tetrahydro-2H-cyclopenta[c]pyridine-4-carbonitrile. Its function is as follows. Serine peptidase whose precise substrate specificity remains unclear. Does not cleave peptides after a arginine or lysine residue. Regulates trans-Golgi network morphology and sorting by regulating the membrane binding of the AP-1 complex. May play a role in the regulation of synaptic vesicle exocytosis. The chain is Prolyl endopeptidase-like (PREPL) from Homo sapiens (Human).